The following is a 175-amino-acid chain: Heme-dependent oxidative N-demethylase delta subunit (175 aa).

As to quaternary structure, the heme-dependent oxidative N-demethylase (HODM) is a heterotetramer composed of a catalytic alpha subunit, a FMN/2Fe-2S-dependent oxidoreductase beta subunit, a gamma subunit with putative aminotransferase activity, and a delta subunit of unknown function.

Its function is as follows. Component of the heme-dependent oxidative N-demethylase (HODM) enzyme, that catalyzes the NADPH-dependent oxidation of dimethylamine (DMA) to methylamine (MA) and formaldehyde. Functions in bacterial methylated amine catabolism, linking alkylamine oxidation to the tetrahydrofolate C1 pool. The function of the delta subunit is unknown. The protein is Heme-dependent oxidative N-demethylase delta subunit of Ectopseudomonas mendocina (strain ymp) (Pseudomonas mendocina).